The primary structure comprises 238 residues: dITP/XTP pyrophosphatase (238 aa).

Residue 7-12 (SANQHK) coordinates substrate. Asp-89 serves as the catalytic Proton acceptor. Asp-89 contributes to the Mg(2+) binding site. Substrate-binding positions include Ser-90, 191 to 194 (FGYD), Lys-217, and 222 to 223 (HR).

The protein belongs to the HAM1 NTPase family. As to quaternary structure, homodimer. Mg(2+) serves as cofactor.

It catalyses the reaction XTP + H2O = XMP + diphosphate + H(+). The catalysed reaction is dITP + H2O = dIMP + diphosphate + H(+). The enzyme catalyses ITP + H2O = IMP + diphosphate + H(+). Its function is as follows. Pyrophosphatase that catalyzes the hydrolysis of nucleoside triphosphates to their monophosphate derivatives, with a high preference for the non-canonical purine nucleotides XTP (xanthosine triphosphate), dITP (deoxyinosine triphosphate) and ITP. Seems to function as a house-cleaning enzyme that removes non-canonical purine nucleotides from the nucleotide pool, thus preventing their incorporation into DNA/RNA and avoiding chromosomal lesions. The protein is dITP/XTP pyrophosphatase of Helicobacter hepaticus (strain ATCC 51449 / 3B1).